The following is a 335-amino-acid chain: Leucine-rich repeat-containing protein 39 (335 aa).

Residues Ala-10–Val-47 are a coiled coil. LRR repeat units lie at residues Gln-84–Phe-105, Asn-107–Leu-128, Arg-130–Cys-151, Ser-153–Leu-176, Lys-177–Asn-197, Ala-200–Met-221, Asn-223–Met-244, Asn-246–Met-267, and Asn-269–Glu-290.

As to quaternary structure, interacts with MYH7 (via C-terminus). In terms of tissue distribution, highly expressed in skeletal muscle and heart. Not detected in other tissues tested.

Its subcellular location is the cytoplasm. It is found in the myofibril. The protein resides in the sarcomere. It localises to the m line. In terms of biological role, component of the sarcomeric M-band which plays a role in myocyte response to biomechanical stress. May regulate expression of other M-band proteins via an SRF-dependent pathway. Important for normal contractile function in heart. In Homo sapiens (Human), this protein is Leucine-rich repeat-containing protein 39 (LRRC39).